Here is a 253-residue protein sequence, read N- to C-terminus: Major prion protein (253 aa).

Positions 1 to 22 (MANLGCWMLVLFVATWSDLGLC) are cleaved as a signal peptide. The interval 23-230 (KKRPKPGGWN…ESQAYYQRGS (208 aa)) is interaction with GRB2, ERI3 and SYN1. The interval 26-108 (PKPGGWNTGG…WHKPSKPKTS (83 aa)) is disordered. 5 consecutive repeat copies span residues 51 to 59 (PQGGGGWGQ), 60 to 67 (PHGGGWGQ), 68 to 75 (PHGGGWGQ), 76 to 83 (PHGGGWGQ), and 84 to 91 (PHGGGWGQ). Residues 51-91 (PQGGGGWGQPHGGGWGQPHGGGWGQPHGGGWGQPHGGGWGQ) are 5 X 8 AA tandem repeats of P-H-G-G-G-W-G-Q. The span at 52 to 95 (QGGGGWGQPHGGGWGQPHGGGWGQPHGGGWGQPHGGGWGQGGGT) shows a compositional bias: gly residues. Histidine 61, glycine 62, glycine 63, histidine 69, glycine 70, glycine 71, histidine 77, glycine 78, glycine 79, histidine 85, glycine 86, and glycine 87 together coordinate Cu(2+). Basic residues predominate over residues 98–108 (QWHKPSKPKTS). Cysteine 179 and cysteine 214 are disulfide-bonded. Asparagine 181 and asparagine 197 each carry an N-linked (GlcNAc...) asparagine glycan. Serine 230 carries the GPI-anchor amidated serine lipid modification. Residues 231 to 253 (SMVLFSSPPVILLISFLIFLIVG) constitute a propeptide, removed in mature form.

Belongs to the prion family. As to quaternary structure, monomer and homodimer. Has a tendency to aggregate into amyloid fibrils containing a cross-beta spine, formed by a steric zipper of superposed beta-strands. Soluble oligomers may represent an intermediate stage on the path to fibril formation. Copper binding may promote oligomerization. Interacts with GRB2, APP, ERI3/PRNPIP and SYN1. Mislocalized cytosolically exposed PrP interacts with MGRN1; this interaction alters MGRN1 subcellular location and causes lysosomal enlargement. Interacts with KIAA1191.

The protein resides in the cell membrane. It is found in the golgi apparatus. Its primary physiological function is unclear. Has cytoprotective activity against internal or environmental stresses. May play a role in neuronal development and synaptic plasticity. May be required for neuronal myelin sheath maintenance. May play a role in iron uptake and iron homeostasis. Soluble oligomers are toxic to cultured neuroblastoma cells and induce apoptosis (in vitro). Association with GPC1 (via its heparan sulfate chains) targets PRNP to lipid rafts. Also provides Cu(2+) or Zn(2+) for the ascorbate-mediated GPC1 deaminase degradation of its heparan sulfate side chains. The polypeptide is Major prion protein (PRNP) (Macaca fascicularis (Crab-eating macaque)).